We begin with the raw amino-acid sequence, 330 residues long: Poly(3-hydroxyalkanoate) polymerase subunit PhaE (330 aa).

A coiled-coil region spans residues 298-328; that stretch reads RSEVDEIHQTIYQLRKEVKSLKKRLGETEAN.

This sequence belongs to the PHA/PHB synthase family. Type III PhaE subfamily. In terms of assembly, forms a heterodimer with PhaC, which may multimerize in the presence of 3-hydroxybutyryl-CoA. Both subunits are required for PHB synthesis in E.coli and in PHA-negative A.eutrophus.

It is found in the cytoplasm. It participates in biopolymer metabolism; poly-(R)-3-hydroxybutanoate biosynthesis. Its function is as follows. When expressed in E.coli with Synechocystis PhaC and C.necator PhaA and PhaB, confers the ability to synthesize up to 13% (w/w) poly(3-hydroxybutyrate) (PHB) depending on the carbon source; all 4 genes are necessary for PHB production. Cell-free in vitro coexpression with PhaE gives a heterodimer able to polymerize 3-hydroxybutyrate-CoA. This subunit has no catalytic activity but enhances the activity of PhaC, the catalytic subunit. In Synechocystis sp. (strain ATCC 27184 / PCC 6803 / Kazusa), this protein is Poly(3-hydroxyalkanoate) polymerase subunit PhaE.